We begin with the raw amino-acid sequence, 284 residues long: tRNA uridine(34) hydroxylase (284 aa).

Residues 132-226 (AGRPVVMLDT…YFEEVGGAHY (95 aa)) enclose the Rhodanese domain. Cys186 functions as the Cysteine persulfide intermediate in the catalytic mechanism.

Belongs to the TrhO family.

The catalysed reaction is uridine(34) in tRNA + AH2 + O2 = 5-hydroxyuridine(34) in tRNA + A + H2O. In terms of biological role, catalyzes oxygen-dependent 5-hydroxyuridine (ho5U) modification at position 34 in tRNAs. The sequence is that of tRNA uridine(34) hydroxylase from Burkholderia orbicola (strain MC0-3).